Consider the following 267-residue polypeptide: Small ribosomal subunit protein uS3 (267 aa).

In terms of domain architecture, KH type-2 spans 39–114 (IRKYLETNLK…RVNINIVEIR (76 aa)). Residues 229 to 248 (ANNRGRGNNRGRGNSRQNGG) show a composition bias toward low complexity. Residues 229–267 (ANNRGRGNNRGRGNSRQNGGRSRRPRQGQASTQGRGGNN) are disordered.

Belongs to the universal ribosomal protein uS3 family. In terms of assembly, part of the 30S ribosomal subunit. Forms a tight complex with proteins S10 and S14.

In terms of biological role, binds the lower part of the 30S subunit head. Binds mRNA in the 70S ribosome, positioning it for translation. The protein is Small ribosomal subunit protein uS3 of Oenococcus oeni (strain ATCC BAA-331 / PSU-1).